Here is a 589-residue protein sequence, read N- to C-terminus: Protein kinase G11A (589 aa).

The tract at residues 1 to 167 is disordered; sequence MASKAMPRAP…SACSSISSVT (167 aa). Composition is skewed to polar residues over residues 15–36, 46–55, and 63–76; these read NLQS…SPSK, AESSKPNSEV, and TQHQ…TGSN. Basic and acidic residues predominate over residues 91–100; the sequence is RLADEEKGVV. The segment covering 142-165 has biased composition (low complexity); that stretch reads SSSRCRPSTSSDVSDESACSSISS. The 339-residue stretch at 195-533 folds into the Protein kinase domain; the sequence is FKLLKKLGCG…ATEIKQHPFF (339 aa). Residues 201–209 and lysine 224 each bind ATP; that span reads LGCGDIGSV. Aspartate 320 acts as the Proton acceptor in catalysis. The disordered stretch occupies residues 551-589; that stretch reads RPVEIERPPKQPVSTSEPAAAPSDAAQKSSDSYLEFDFF.

Belongs to the protein kinase superfamily. Ser/Thr protein kinase family.

The catalysed reaction is L-seryl-[protein] + ATP = O-phospho-L-seryl-[protein] + ADP + H(+). The enzyme catalyses L-threonyl-[protein] + ATP = O-phospho-L-threonyl-[protein] + ADP + H(+). Its function is as follows. May play a role in the regulation of metabolism and signal transduction processes. The protein is Protein kinase G11A of Oryza sativa subsp. indica (Rice).